We begin with the raw amino-acid sequence, 429 residues long: Histidine--tRNA ligase (429 aa).

This sequence belongs to the class-II aminoacyl-tRNA synthetase family. In terms of assembly, homodimer.

The protein localises to the cytoplasm. The enzyme catalyses tRNA(His) + L-histidine + ATP = L-histidyl-tRNA(His) + AMP + diphosphate + H(+). The polypeptide is Histidine--tRNA ligase (Pseudomonas putida (strain GB-1)).